The primary structure comprises 240 residues: Peptidyl-tRNA hydrolase (240 aa).

TRNA is bound at residue Tyr-14. His-19 (proton acceptor) is an active-site residue. TRNA contacts are provided by Phe-64, Asn-66, and Asn-112. Positions Glu-196 to Pro-227 are disordered. The segment covering His-209–Ala-218 has biased composition (polar residues).

It belongs to the PTH family. As to quaternary structure, monomer.

It is found in the cytoplasm. The enzyme catalyses an N-acyl-L-alpha-aminoacyl-tRNA + H2O = an N-acyl-L-amino acid + a tRNA + H(+). Functionally, hydrolyzes ribosome-free peptidyl-tRNAs (with 1 or more amino acids incorporated), which drop off the ribosome during protein synthesis, or as a result of ribosome stalling. In terms of biological role, catalyzes the release of premature peptidyl moieties from peptidyl-tRNA molecules trapped in stalled 50S ribosomal subunits, and thus maintains levels of free tRNAs and 50S ribosomes. This chain is Peptidyl-tRNA hydrolase, found in Mesorhizobium japonicum (strain LMG 29417 / CECT 9101 / MAFF 303099) (Mesorhizobium loti (strain MAFF 303099)).